Here is a 380-residue protein sequence, read N- to C-terminus: Probable dual-specificity RNA methyltransferase RlmN (380 aa).

E112 serves as the catalytic Proton acceptor. One can recognise a Radical SAM core domain in the interval 118–358 (YPDRVTACLS…TTVRDTRGRE (241 aa)). Residues C125 and C363 are joined by a disulfide bond. Positions 132, 136, and 139 each coordinate [4Fe-4S] cluster. S-adenosyl-L-methionine is bound by residues 187-188 (GE), S221, 244-246 (SLH), and N320. Catalysis depends on C363, which acts as the S-methylcysteine intermediate.

Belongs to the radical SAM superfamily. RlmN family. It depends on [4Fe-4S] cluster as a cofactor.

Its subcellular location is the cytoplasm. The enzyme catalyses adenosine(2503) in 23S rRNA + 2 reduced [2Fe-2S]-[ferredoxin] + 2 S-adenosyl-L-methionine = 2-methyladenosine(2503) in 23S rRNA + 5'-deoxyadenosine + L-methionine + 2 oxidized [2Fe-2S]-[ferredoxin] + S-adenosyl-L-homocysteine. The catalysed reaction is adenosine(37) in tRNA + 2 reduced [2Fe-2S]-[ferredoxin] + 2 S-adenosyl-L-methionine = 2-methyladenosine(37) in tRNA + 5'-deoxyadenosine + L-methionine + 2 oxidized [2Fe-2S]-[ferredoxin] + S-adenosyl-L-homocysteine. Its function is as follows. Specifically methylates position 2 of adenine 2503 in 23S rRNA and position 2 of adenine 37 in tRNAs. This chain is Probable dual-specificity RNA methyltransferase RlmN, found in Salinispora arenicola (strain CNS-205).